We begin with the raw amino-acid sequence, 384 residues long: 8-amino-7-oxononanoate synthase (384 aa).

Arg-21 contributes to the substrate binding site. 108 to 109 contacts pyridoxal 5'-phosphate; that stretch reads GF. His-133 contacts substrate. Residues Ser-179, His-207, and Thr-233 each coordinate pyridoxal 5'-phosphate. Lys-236 bears the N6-(pyridoxal phosphate)lysine mark. Thr-352 is a substrate binding site.

This sequence belongs to the class-II pyridoxal-phosphate-dependent aminotransferase family. BioF subfamily. As to quaternary structure, homodimer. Pyridoxal 5'-phosphate serves as cofactor.

The enzyme catalyses 6-carboxyhexanoyl-[ACP] + L-alanine + H(+) = (8S)-8-amino-7-oxononanoate + holo-[ACP] + CO2. It functions in the pathway cofactor biosynthesis; biotin biosynthesis. Its function is as follows. Catalyzes the decarboxylative condensation of pimeloyl-[acyl-carrier protein] and L-alanine to produce 8-amino-7-oxononanoate (AON), [acyl-carrier protein], and carbon dioxide. This chain is 8-amino-7-oxononanoate synthase, found in Escherichia coli (strain K12 / DH10B).